Here is a 72-residue protein sequence, read N- to C-terminus: Translational regulator CsrA (72 aa).

The protein belongs to the CsrA/RsmA family. As to quaternary structure, homodimer; the beta-strands of each monomer intercalate to form a hydrophobic core, while the alpha-helices form wings that extend away from the core.

It localises to the cytoplasm. A translational regulator that binds mRNA to regulate translation initiation and/or mRNA stability. Usually binds in the 5'-UTR at or near the Shine-Dalgarno sequence preventing ribosome-binding, thus repressing translation. Its main target seems to be the major flagellin gene, while its function is anatagonized by FliW. This Lachnoclostridium phytofermentans (strain ATCC 700394 / DSM 18823 / ISDg) (Clostridium phytofermentans) protein is Translational regulator CsrA.